Here is a 415-residue protein sequence, read N- to C-terminus: MQVYAVGGAIRDELLGKPSQDRDYVVVGATPAEMEAAGYRPVGKDFPVFLHPRTQEEYALARTERKTAMGYKGFAFYCEPDVTLEDDLVRRDLTINAMARAVDADGNLTGPVIDPHGGQRDLAARLFRHVSDAFAEDPVRILRLARFAARFHDFNVAAETMRLMREMVAAGEVDALVPERVWQELARGLMEARPSRMFEVLRECGALARLLPELERLWGVPQRADFHPEVDTGVHVMMVIDCAAALGAPLPVRFAALVHDLGKGTTPEDVLPRHIGHELRSVRLLEEVCARLRVPNECRDLAVVVAREHGHIHRSLELGAAAVVRLLERCDALRKPARFAQALQACEADKRGRKGFEHSDYPQAARLLAAREAAASVDAGAIARACADNVAQIKDRVHAARVEAVAQRLGAQPGE.

ATP is bound by residues Gly8 and Arg11. Gly8 and Arg11 together coordinate CTP. The Mg(2+) site is built by Asp21 and Asp23. Residues Arg91, Arg143, and Arg146 each contribute to the ATP site. 3 residues coordinate CTP: Arg91, Arg143, and Arg146. The HD domain maps to 232–333 (TGVHVMMVID…VRLLERCDAL (102 aa)).

It belongs to the tRNA nucleotidyltransferase/poly(A) polymerase family. Bacterial CCA-adding enzyme type 1 subfamily. As to quaternary structure, monomer. Can also form homodimers and oligomers. It depends on Mg(2+) as a cofactor. The cofactor is Ni(2+).

The enzyme catalyses a tRNA precursor + 2 CTP + ATP = a tRNA with a 3' CCA end + 3 diphosphate. It carries out the reaction a tRNA with a 3' CCA end + 2 CTP + ATP = a tRNA with a 3' CCACCA end + 3 diphosphate. In terms of biological role, catalyzes the addition and repair of the essential 3'-terminal CCA sequence in tRNAs without using a nucleic acid template. Adds these three nucleotides in the order of C, C, and A to the tRNA nucleotide-73, using CTP and ATP as substrates and producing inorganic pyrophosphate. tRNA 3'-terminal CCA addition is required both for tRNA processing and repair. Also involved in tRNA surveillance by mediating tandem CCA addition to generate a CCACCA at the 3' terminus of unstable tRNAs. While stable tRNAs receive only 3'-terminal CCA, unstable tRNAs are marked with CCACCA and rapidly degraded. The protein is Multifunctional CCA protein of Cupriavidus taiwanensis (strain DSM 17343 / BCRC 17206 / CCUG 44338 / CIP 107171 / LMG 19424 / R1) (Ralstonia taiwanensis (strain LMG 19424)).